The sequence spans 341 residues: Chorismate synthase (341 aa).

2 disordered regions span residues 45–64 (LERR…GRQE) and 109–134 (HADD…GRET). Arg48 provides a ligand contact to NADP(+). FMN-binding positions include 128 to 130 (RSS), Gly280, 295 to 299 (KPTSS), and Arg308.

Belongs to the chorismate synthase family. In terms of assembly, homotetramer. FMNH2 is required as a cofactor.

It catalyses the reaction 5-O-(1-carboxyvinyl)-3-phosphoshikimate = chorismate + phosphate. It functions in the pathway metabolic intermediate biosynthesis; chorismate biosynthesis; chorismate from D-erythrose 4-phosphate and phosphoenolpyruvate: step 7/7. Its function is as follows. Catalyzes the anti-1,4-elimination of the C-3 phosphate and the C-6 proR hydrogen from 5-enolpyruvylshikimate-3-phosphate (EPSP) to yield chorismate, which is the branch point compound that serves as the starting substrate for the three terminal pathways of aromatic amino acid biosynthesis. This reaction introduces a second double bond into the aromatic ring system. The polypeptide is Chorismate synthase (Bdellovibrio bacteriovorus (strain ATCC 15356 / DSM 50701 / NCIMB 9529 / HD100)).